A 304-amino-acid polypeptide reads, in one-letter code: GMP synthase [glutamine-hydrolyzing] subunit B (304 aa).

The GMPS ATP-PPase domain maps to 2–183 (VKVEKFIPNA…LDLPEEICER (182 aa)). Residue 28–34 (SGGVDSS) participates in ATP binding.

In terms of assembly, heterodimer composed of a glutamine amidotransferase subunit (A) and a GMP-binding subunit (B).

It catalyses the reaction XMP + L-glutamine + ATP + H2O = GMP + L-glutamate + AMP + diphosphate + 2 H(+). It participates in purine metabolism; GMP biosynthesis; GMP from XMP (L-Gln route): step 1/1. Catalyzes the synthesis of GMP from XMP. This chain is GMP synthase [glutamine-hydrolyzing] subunit B, found in Methanococcoides burtonii (strain DSM 6242 / NBRC 107633 / OCM 468 / ACE-M).